The primary structure comprises 102 residues: Large ribosomal subunit protein uL24 (102 aa).

The protein belongs to the universal ribosomal protein uL24 family. In terms of assembly, part of the 50S ribosomal subunit.

One of two assembly initiator proteins, it binds directly to the 5'-end of the 23S rRNA, where it nucleates assembly of the 50S subunit. Functionally, one of the proteins that surrounds the polypeptide exit tunnel on the outside of the subunit. This Agrobacterium fabrum (strain C58 / ATCC 33970) (Agrobacterium tumefaciens (strain C58)) protein is Large ribosomal subunit protein uL24.